We begin with the raw amino-acid sequence, 43 residues long: Protein PsbN (43 aa).

Residues 5-25 (LILSIFIFSLLLGITSYSIYI) form a helical membrane-spanning segment.

Belongs to the PsbN family.

The protein resides in the plastid. Its subcellular location is the chloroplast thylakoid membrane. Functionally, may play a role in photosystem I and II biogenesis. This chain is Protein PsbN, found in Cyanidium caldarium (Red alga).